The sequence spans 414 residues: Multifunctional CCA protein (414 aa).

2 residues coordinate ATP: Gly-8 and Arg-11. Positions 8 and 11 each coordinate CTP. The Mg(2+) site is built by Glu-21 and Asp-23. The ATP site is built by Arg-91, Arg-137, and Arg-140. CTP-binding residues include Arg-91, Arg-137, and Arg-140. Residues 228 to 329 form the HD domain; it reads TGIHTMMTVA…LKLFDAIDVW (102 aa).

This sequence belongs to the tRNA nucleotidyltransferase/poly(A) polymerase family. Bacterial CCA-adding enzyme type 1 subfamily. As to quaternary structure, monomer. Can also form homodimers and oligomers. The cofactor is Mg(2+). It depends on Ni(2+) as a cofactor.

The catalysed reaction is a tRNA precursor + 2 CTP + ATP = a tRNA with a 3' CCA end + 3 diphosphate. The enzyme catalyses a tRNA with a 3' CCA end + 2 CTP + ATP = a tRNA with a 3' CCACCA end + 3 diphosphate. Its function is as follows. Catalyzes the addition and repair of the essential 3'-terminal CCA sequence in tRNAs without using a nucleic acid template. Adds these three nucleotides in the order of C, C, and A to the tRNA nucleotide-73, using CTP and ATP as substrates and producing inorganic pyrophosphate. tRNA 3'-terminal CCA addition is required both for tRNA processing and repair. Also involved in tRNA surveillance by mediating tandem CCA addition to generate a CCACCA at the 3' terminus of unstable tRNAs. While stable tRNAs receive only 3'-terminal CCA, unstable tRNAs are marked with CCACCA and rapidly degraded. The chain is Multifunctional CCA protein from Pectobacterium carotovorum subsp. carotovorum (strain PC1).